The chain runs to 187 residues: uncharacterized protein (187 aa).

This is an uncharacterized protein from Saccharomyces cerevisiae (strain ATCC 204508 / S288c) (Baker's yeast).